Reading from the N-terminus, the 499-residue chain is Citrinin biosynthesis cluster MFS transporter mrr1 (499 aa).

The interval 1-29 is disordered; sequence MKEEIDAPVSTDASGTDLENARDQPSGEK. A run of 8 helical transmembrane segments spans residues 58-78, 95-115, 124-144, 155-175, 187-207, 215-235, 291-311, and 327-347; these read SLITCIFSTLTIWVTFSSSVF, VMTLGTSLTVLGFTVGPLVWG, LKPLYIGYAIFIIFQVPVAVA, FFLGFFGTSALAIIPGALADF, LFSAATFVGPIFGPIIGGFIV, WTAWITMIPASFFGIIAFLTL, ILVCMTIYISLIYGILYLFFV, and GIAALPFLGILVGVLMGCLLV. Residue Asn361 is glycosylated (N-linked (GlcNAc...) asparagine). The next 4 membrane-spanning stretches (helical) occupy residues 370-390, 395-415, 443-463, and 467-487; these read LPPMIVAAILLPIGLFWFGWT, ISWAPQAIAGAPIGMGILMIW, AVGAAFPLFATAMYHKLGVDW, and LLGFLSIAMIPIPVIFYFYGA.

Belongs to the major facilitator superfamily. CAR1 family.

It localises to the membrane. Its function is as follows. MFS transporter; part of the gene cluster that mediates the biosynthesis the mycotoxin citrinin, a hepato-nephrotoxic compound to humans due to inhibition of respiration complex III. This chain is Citrinin biosynthesis cluster MFS transporter mrr1, found in Monascus ruber (Mold).